The sequence spans 193 residues: Shikimate kinase (193 aa).

An ATP-binding site is contributed by 31–36 (GVGKTT). Threonine 35 is a Mg(2+) binding site. Residues aspartate 53, arginine 77, and glycine 103 each coordinate substrate. Arginine 141 is an ATP binding site. Arginine 160 is a binding site for substrate. Glutamine 176 provides a ligand contact to ATP.

This sequence belongs to the shikimate kinase family. As to quaternary structure, monomer. Requires Mg(2+) as cofactor.

It is found in the cytoplasm. The catalysed reaction is shikimate + ATP = 3-phosphoshikimate + ADP + H(+). The protein operates within metabolic intermediate biosynthesis; chorismate biosynthesis; chorismate from D-erythrose 4-phosphate and phosphoenolpyruvate: step 5/7. Its function is as follows. Catalyzes the specific phosphorylation of the 3-hydroxyl group of shikimic acid using ATP as a cosubstrate. This chain is Shikimate kinase, found in Novosphingobium aromaticivorans (strain ATCC 700278 / DSM 12444 / CCUG 56034 / CIP 105152 / NBRC 16084 / F199).